The sequence spans 412 residues: tRNA pseudouridine synthase Pus10 (412 aa).

Residues 73 to 197 (HEPSIKFLSN…TGSVEVQIMP (125 aa)) form the THUMP domain. Positions 308 and 376 each coordinate substrate.

Belongs to the pseudouridine synthase Pus10 family.

It catalyses the reaction uridine(54) in tRNA = pseudouridine(54) in tRNA. It carries out the reaction uridine(55) in tRNA = pseudouridine(55) in tRNA. Functionally, responsible for synthesis of pseudouridine from uracil-54 and uracil-55 in the psi GC loop of transfer RNAs. The sequence is that of tRNA pseudouridine synthase Pus10 from Vulcanisaeta distributa (strain DSM 14429 / JCM 11212 / NBRC 100878 / IC-017).